Consider the following 158-residue polypeptide: 6,7-dimethyl-8-ribityllumazine synthase (158 aa).

Residues Phe-23, 61–63, and 85–87 contribute to the 5-amino-6-(D-ribitylamino)uracil site; these read SFE and AVI. 90-91 contacts (2S)-2-hydroxy-3-oxobutyl phosphate; it reads DT. The active-site Proton donor is His-93. Residue Phe-118 participates in 5-amino-6-(D-ribitylamino)uracil binding. Arg-132 is a binding site for (2S)-2-hydroxy-3-oxobutyl phosphate.

The protein belongs to the DMRL synthase family.

It catalyses the reaction (2S)-2-hydroxy-3-oxobutyl phosphate + 5-amino-6-(D-ribitylamino)uracil = 6,7-dimethyl-8-(1-D-ribityl)lumazine + phosphate + 2 H2O + H(+). It participates in cofactor biosynthesis; riboflavin biosynthesis; riboflavin from 2-hydroxy-3-oxobutyl phosphate and 5-amino-6-(D-ribitylamino)uracil: step 1/2. Its function is as follows. Catalyzes the formation of 6,7-dimethyl-8-ribityllumazine by condensation of 5-amino-6-(D-ribitylamino)uracil with 3,4-dihydroxy-2-butanone 4-phosphate. This is the penultimate step in the biosynthesis of riboflavin. The protein is 6,7-dimethyl-8-ribityllumazine synthase of Prochlorococcus marinus (strain NATL1A).